We begin with the raw amino-acid sequence, 426 residues long: MDSKLLLVTQSGSVDDLYSLIQAAPDILQKVDVLPIIHTPLHEASSAGKLDLAMELMILKPSFAKKLNEYGLSPLHLAVENDQVELALELVKVDPSLVRIRGRGGMTPLHLVAKKGDVDLLTDFLLACPESIKDVNVNGETILHITIMNDKYEQLKVLTGWMQKMRDSDDVFIDVLNRRDRGGNTVLHLAAYENNDKVVKQLVKCLSLDRNIQNKSGMTALDVLRARGSHMNKEIEEIIQMSGGKTGGSLSGIQEWYIFLREPVTFKEHCKTRIARYRSRISDGSRNALLVIAALIISATFQTAAQLLDKEKLDKVKKNGMRFSEFQLWGCNTVAFSIAILFSFILLPVGRAYEWWYFIITVPLVFSYFLLMYMMHGLSFFFLIIYEGGLFLVYLLVLYVKWKRCTQMKVRKPKSDLISDNFKNMV.

ANK repeat units lie at residues 1–29 (MDSKLLLVTQSGSVDDLYSLIQAAPDILQ), 36–65 (IIHTPLHEASSAGKLDLAMELMILKPSFAK), 70–99 (YGLSPLHLAVENDQVELALELVKVDPSLVR), 104–134 (GGMTPLHLVAKKGDVDLLTDFLLACPESIKD), 138–167 (NGETILHITIMNDKYEQLKVLTGWMQKMRD), and 182–212 (GGNTVLHLAAYENNDKVVKQLVKCLSLDRNI). Transmembrane regions (helical) follow at residues 288–308 (ALLVIAALIISATFQTAAQLL), 329–349 (WGCNTVAFSIAILFSFILLPV), 355–375 (WWYFIITVPLVFSYFLLMYMM), and 380–400 (FFFLIIYEGGLFLVYLLVLYV).

The protein resides in the cell membrane. Involved in plant defense. Required for basal resistance against Pseudomonas syringae pv. tomato DC3000. Required for resistance against nonpathogenic bacteria. May be involved in signaling components that function downstream of SNC2 and upstream of NPR1 and WRKY70 to regulate defense responses. The sequence is that of Ankyrin repeat-containing protein BDA1 from Arabidopsis thaliana (Mouse-ear cress).